The primary structure comprises 325 residues: L-lactate dehydrogenase (325 aa).

Residues V19, D40, K45, Y70, and 84–85 (GA) contribute to the NAD(+) site. Residues Q87 and R93 each contribute to the substrate site. NAD(+)-binding positions include T106, 123-125 (AAN), and S148. Substrate is bound at residue 125-128 (NPVD). 153–156 (DSAR) contributes to the substrate binding site. 2 residues coordinate beta-D-fructose 1,6-bisphosphate: R158 and H173. The Proton acceptor role is filled by H180. At Y225 the chain carries Phosphotyrosine. T234 contacts substrate.

The protein belongs to the LDH/MDH superfamily. LDH family. Homotetramer.

The protein resides in the cytoplasm. It catalyses the reaction (S)-lactate + NAD(+) = pyruvate + NADH + H(+). Its pathway is fermentation; pyruvate fermentation to lactate; (S)-lactate from pyruvate: step 1/1. With respect to regulation, allosterically activated by fructose 1,6-bisphosphate (FBP). Functionally, catalyzes the conversion of lactate to pyruvate. In Latilactobacillus sakei subsp. sakei (strain 23K) (Lactobacillus sakei subsp. sakei), this protein is L-lactate dehydrogenase.